A 513-amino-acid polypeptide reads, in one-letter code: Cobyric acid synthase (513 aa).

The GATase cobBQ-type domain occupies 252–457; it reads KIDIAVIRLP…LHGIFDEEGI (206 aa). The active-site Nucleophile is C333. Residue H449 is part of the active site.

The protein belongs to the CobB/CobQ family. CobQ subfamily.

Its pathway is cofactor biosynthesis; adenosylcobalamin biosynthesis. Catalyzes amidations at positions B, D, E, and G on adenosylcobyrinic A,C-diamide. NH(2) groups are provided by glutamine, and one molecule of ATP is hydrogenolyzed for each amidation. The polypeptide is Cobyric acid synthase (Lachnoclostridium phytofermentans (strain ATCC 700394 / DSM 18823 / ISDg) (Clostridium phytofermentans)).